A 265-amino-acid polypeptide reads, in one-letter code: Synaptoporin (265 aa).

The Cytoplasmic portion of the chain corresponds to 1–4 (MCMV). The 202-residue stretch at 1–202 (MCMVIFAPLF…NIWFVFKETG (202 aa)) folds into the MARVEL domain. A helical transmembrane segment spans residues 5 to 25 (IFAPLFAMFAFATCGGYSGGL). At 26 to 81 (RLSVDCVNKTESNLSIDIAFAYPFRLQQVTFEVPTCEGKEQQKLALVGDSSSSAEF) the chain is on the vesicular side. N-linked (GlcNAc...) asparagine glycans are attached at residues N33 and N38. Residues 82-102 (FVTVAVFAFLYSLAATVVYIF) form a helical membrane-spanning segment. Residues 103-114 (FQNKYRENNRGP) are Cytoplasmic-facing. Residues 115-135 (LIDFIVTVVFSFLWLVGSSAW) traverse the membrane as a helical segment. Residues 136–177 (AKGLSDVKVATDPKEVLLLMSACKQPSNKCMAVHSPVMSSLN) are Vesicular-facing. The helical transmembrane segment at 178-198 (TSVVFGFLNFILWAGNIWFVF) threads the bilayer. Residues 199-265 (KETGWHSSGQ…SGPTSFNNQI (67 aa)) lie on the Cytoplasmic side of the membrane. A run of 5 repeats spans residues 210-214 (YLSDP), 222-226 (YNQGR), 227-231 (YNQES), 232-236 (YGSSG), and 238-242 (YSQQA). The segment at 210–242 (YLSDPMEKHSSSYNQGRYNQESYGSSGGYSQQA) is 5 X approximate repeats. At S212 the chain carries Phosphoserine. Residues 221 to 230 (SYNQGRYNQE) show a composition bias toward polar residues. A disordered region spans residues 221 to 265 (SYNQGRYNQESYGSSGGYSQQANLGPTSDEFGQQPSGPTSFNNQI). Residues 240 to 265 (QQANLGPTSDEFGQQPSGPTSFNNQI) show a composition bias toward polar residues.

The protein belongs to the synaptophysin/synaptobrevin family.

The protein localises to the cytoplasmic vesicle. It is found in the secretory vesicle. It localises to the synaptic vesicle membrane. Its subcellular location is the synapse. The protein resides in the synaptosome. In terms of biological role, intrinsic membrane protein of small synaptic vesicles. Probable vesicular channel protein. This is Synaptoporin (Synpr) from Mus musculus (Mouse).